A 429-amino-acid polypeptide reads, in one-letter code: Glutamyl-tRNA reductase (429 aa).

Substrate is bound by residues 50–53 (TCNR), S116, 121–123 (EPQ), and Q127. The Nucleophile role is filled by C51. 196–201 (GAGEMA) contacts NADP(+).

It belongs to the glutamyl-tRNA reductase family. In terms of assembly, homodimer.

It catalyses the reaction (S)-4-amino-5-oxopentanoate + tRNA(Glu) + NADP(+) = L-glutamyl-tRNA(Glu) + NADPH + H(+). The protein operates within porphyrin-containing compound metabolism; protoporphyrin-IX biosynthesis; 5-aminolevulinate from L-glutamyl-tRNA(Glu): step 1/2. Its function is as follows. Catalyzes the NADPH-dependent reduction of glutamyl-tRNA(Glu) to glutamate 1-semialdehyde (GSA). The polypeptide is Glutamyl-tRNA reductase (Thermodesulfovibrio yellowstonii (strain ATCC 51303 / DSM 11347 / YP87)).